Here is a 275-residue protein sequence, read N- to C-terminus: Gamma carbonic anhydrase 1, mitochondrial (275 aa).

The N-terminal 43 residues, 1 to 43 (MGTLGRAFYSVGFWIRETGQALDRLGCRLQGKNYFREQLSRHR), are a transit peptide targeting the mitochondrion. Substrate contacts are provided by residues 86-88 (RGD) and 101-102 (QD). Histidine 107, histidine 130, and histidine 135 together coordinate Zn(2+). Asparagine 209 serves as a coordination point for substrate. Residues 256–275 (LNLPNNILPDKETKRPSNVN) form a disordered region. Basic and acidic residues predominate over residues 264–275 (PDKETKRPSNVN).

This sequence belongs to the gamma-class carbonic anhydrase family. As to quaternary structure, homotrimer. Component of the mitochondrial oxidoreductase respiratory chain complex I; element of the extra matrix-exposed domain, which is attached to the membrane arm of this complex. Requires Zn(2+) as cofactor.

Its subcellular location is the mitochondrion membrane. Its function is as follows. Enzyme involved in the catabolism of H(2)CO(3) but that does not mediates the reversible hydration of carbon dioxide. Mediates complex I assembly in mitochondria and respiration. This Arabidopsis thaliana (Mouse-ear cress) protein is Gamma carbonic anhydrase 1, mitochondrial (GAMMACA1).